The sequence spans 485 residues: E3 ubiquitin-protein ligase RNF8 (485 aa).

The FHA domain occupies 38 to 92 (VTVGRGFGVTYQLVSKICPLMISRNHCVLKQNPEGQWTIMDNKSLNGVWLNRARL). Positions 68–72 (QNPEG) are required for interaction with PIWIL1. Ser-157 bears the Phosphoserine mark. The interval 181 to 220 (CESGQPVKSQGKGEVASTPSDNLDPKLTALEPSKTTGAPI) is disordered. Residues 403–441 (CIICSEYFIEAVTLNCAHSFCSYCINEWMKRKIECPICR) form an RING-type zinc finger.

Belongs to the RNF8 family. Homodimer. Forms a E2-E3 ubiquitin ligase complex composed of the RNF8 homodimer and a E2 heterodimer of UBE2N and UBE2V2. Interacts with class III E2s, including UBE2E1, UBE2E2, and UBE2E3 and with UBE2N. Interacts with RXRA. Interacts (via FHA domain) with ATM-phosphorylated MDC1. Interacts (via FHA domain) with 'Thr-4827' phosphorylated HERC2 (via C-terminus). Interacts with PIWIL1; leading to sequester RNF8 in the cytoplasm. Interacts with WRAP53/TCAB1. In terms of assembly, (Microbial infection) Interacts (via FHA domain) with phosphorylated human herpesvirus 1 ICP0 protein; leading to RNF8 degradation by the proteasome. In terms of processing, autoubiquitinated through 'Lys-48' and 'Lys-63' of ubiquitin. 'Lys-63' polyubiquitination is mediated by UBE2N. 'Lys-29'-type polyubiquitination is also observed, but it doesn't require its own functional RING-type zinc finger. As to expression, ubiquitous. In fetal tissues, highest expression in brain, thymus and liver. In adult tissues, highest levels in brain and testis, lowest levels in peripheral blood cells.

Its subcellular location is the nucleus. It is found in the cytoplasm. It localises to the midbody. The protein localises to the chromosome. The protein resides in the telomere. The catalysed reaction is S-ubiquitinyl-[E2 ubiquitin-conjugating enzyme]-L-cysteine + [acceptor protein]-L-lysine = [E2 ubiquitin-conjugating enzyme]-L-cysteine + N(6)-ubiquitinyl-[acceptor protein]-L-lysine.. It functions in the pathway protein modification; protein ubiquitination. Its function is as follows. E3 ubiquitin-protein ligase that plays a key role in DNA damage signaling via 2 distinct roles: by mediating the 'Lys-63'-linked ubiquitination of histones H2A and H2AX and promoting the recruitment of DNA repair proteins at double-strand breaks (DSBs) sites, and by catalyzing 'Lys-48'-linked ubiquitination to remove target proteins from DNA damage sites. Following DNA DSBs, it is recruited to the sites of damage by ATM-phosphorylated MDC1 and catalyzes the 'Lys-63'-linked ubiquitination of histones H2A and H2AX, thereby promoting the formation of TP53BP1 and BRCA1 ionizing radiation-induced foci (IRIF). Also controls the recruitment of UIMC1-BRCC3 (RAP80-BRCC36) and PAXIP1/PTIP to DNA damage sites. Promotes the recruitment of NBN to DNA damage sites by catalyzing 'Lys-6'-linked ubiquitination of NBN. Also recruited at DNA interstrand cross-links (ICLs) sites and catalyzes 'Lys-63'-linked ubiquitination of histones H2A and H2AX, leading to recruitment of FAAP20/C1orf86 and Fanconi anemia (FA) complex, followed by interstrand cross-link repair. H2A ubiquitination also mediates the ATM-dependent transcriptional silencing at regions flanking DSBs in cis, a mechanism to avoid collision between transcription and repair intermediates. Promotes the formation of 'Lys-63'-linked polyubiquitin chains via interactions with the specific ubiquitin-conjugating UBE2N/UBC13 and ubiquitinates non-histone substrates such as PCNA. Substrates that are polyubiquitinated at 'Lys-63' are usually not targeted for degradation. Also catalyzes the formation of 'Lys-48'-linked polyubiquitin chains via interaction with the ubiquitin-conjugating UBE2L6/UBCH8, leading to degradation of substrate proteins such as CHEK2, JMJD2A/KDM4A and KU80/XRCC5: it is still unclear how the preference toward 'Lys-48'- versus 'Lys-63'-linked ubiquitination is regulated but it could be due to RNF8 ability to interact with specific E2 specific ligases. For instance, interaction with phosphorylated HERC2 promotes the association between RNF8 and UBE2N/UBC13 and favors the specific formation of 'Lys-63'-linked ubiquitin chains. Promotes non-homologous end joining (NHEJ) by promoting the 'Lys-48'-linked ubiquitination and degradation the of KU80/XRCC5. Following DNA damage, mediates the ubiquitination and degradation of JMJD2A/KDM4A in collaboration with RNF168, leading to unmask H4K20me2 mark and promote the recruitment of TP53BP1 at DNA damage sites. Following DNA damage, mediates the ubiquitination and degradation of POLD4/p12, a subunit of DNA polymerase delta. In the absence of POLD4, DNA polymerase delta complex exhibits higher proofreading activity. In addition to its function in damage signaling, also plays a role in higher-order chromatin structure by mediating extensive chromatin decondensation. Involved in the activation of ATM by promoting histone H2B ubiquitination, which indirectly triggers histone H4 'Lys-16' acetylation (H4K16ac), establishing a chromatin environment that promotes efficient activation of ATM kinase. Required in the testis, where it plays a role in the replacement of histones during spermatogenesis. At uncapped telomeres, promotes the joining of deprotected chromosome ends by inducing H2A ubiquitination and TP53BP1 recruitment, suggesting that it may enhance cancer development by aggravating telomere-induced genome instability in case of telomeric crisis. Promotes the assembly of RAD51 at DNA DSBs in the absence of BRCA1 and TP53BP1 Also involved in class switch recombination in immune system, via its role in regulation of DSBs repair. May be required for proper exit from mitosis after spindle checkpoint activation and may regulate cytokinesis. May play a role in the regulation of RXRA-mediated transcriptional activity. Not involved in RXRA ubiquitination by UBE2E2. The chain is E3 ubiquitin-protein ligase RNF8 from Homo sapiens (Human).